Here is a 206-residue protein sequence, read N- to C-terminus: Glycerol-3-phosphate acyltransferase (206 aa).

The next 6 helical transmembrane spans lie at 4 to 24 (IIGILILGYLLGSIPFALLVG), 55 to 75 (IIVLIGDLGKGAVASLVPILL), 78 to 98 (ELHPLFAGLAAVVGHIYPVFA), 112 to 132 (MLLVTSPILFLVLLISFLTTL), 137 to 157 (MVSLSSIVSASIGIVAAITIG), and 158 to 178 (IVEQDWIVPTFFTILALFVIF).

Belongs to the PlsY family. Probably interacts with PlsX.

Its subcellular location is the cell membrane. It catalyses the reaction an acyl phosphate + sn-glycerol 3-phosphate = a 1-acyl-sn-glycero-3-phosphate + phosphate. Its pathway is lipid metabolism; phospholipid metabolism. Functionally, catalyzes the transfer of an acyl group from acyl-phosphate (acyl-PO(4)) to glycerol-3-phosphate (G3P) to form lysophosphatidic acid (LPA). This enzyme utilizes acyl-phosphate as fatty acyl donor, but not acyl-CoA or acyl-ACP. The protein is Glycerol-3-phosphate acyltransferase of Exiguobacterium sibiricum (strain DSM 17290 / CCUG 55495 / CIP 109462 / JCM 13490 / 255-15).